The chain runs to 307 residues: UDP-N-acetylenolpyruvoylglucosamine reductase (307 aa).

In terms of domain architecture, FAD-binding PCMH-type spans 33–198 (KVGGPVDILV…LEAILKLSLG (166 aa)). Arg-177 is a catalytic residue. The active-site Proton donor is Ser-227. Glu-297 is an active-site residue.

It belongs to the MurB family. It depends on FAD as a cofactor.

The protein localises to the cytoplasm. It catalyses the reaction UDP-N-acetyl-alpha-D-muramate + NADP(+) = UDP-N-acetyl-3-O-(1-carboxyvinyl)-alpha-D-glucosamine + NADPH + H(+). The protein operates within cell wall biogenesis; peptidoglycan biosynthesis. Functionally, cell wall formation. The chain is UDP-N-acetylenolpyruvoylglucosamine reductase from Clostridium tetani (strain Massachusetts / E88).